The following is a 390-amino-acid chain: Coenzyme A biosynthesis bifunctional protein CoaBC (390 aa).

The phosphopantothenoylcysteine decarboxylase stretch occupies residues 1–188 (MDKNKHILIG…NQKDYLKNKK (188 aa)). The active-site Proton donor is Cys156. The interval 189 to 390 (ILITASRTEE…VAKEILKILY (202 aa)) is phosphopantothenate--cysteine ligase. CTP contacts are provided by residues Asp277, Lys287, 304 to 307 (PDII), Phe323, Lys338, and Lys342.

It in the N-terminal section; belongs to the HFCD (homo-oligomeric flavin containing Cys decarboxylase) superfamily. The protein in the C-terminal section; belongs to the PPC synthetase family. Requires Mg(2+) as cofactor. The cofactor is FMN.

It carries out the reaction N-[(R)-4-phosphopantothenoyl]-L-cysteine + H(+) = (R)-4'-phosphopantetheine + CO2. The enzyme catalyses (R)-4'-phosphopantothenate + L-cysteine + CTP = N-[(R)-4-phosphopantothenoyl]-L-cysteine + CMP + diphosphate + H(+). Its pathway is cofactor biosynthesis; coenzyme A biosynthesis; CoA from (R)-pantothenate: step 2/5. It participates in cofactor biosynthesis; coenzyme A biosynthesis; CoA from (R)-pantothenate: step 3/5. Functionally, catalyzes two sequential steps in the biosynthesis of coenzyme A. In the first step cysteine is conjugated to 4'-phosphopantothenate to form 4-phosphopantothenoylcysteine. In the second step the latter compound is decarboxylated to form 4'-phosphopantotheine. This chain is Coenzyme A biosynthesis bifunctional protein CoaBC, found in Borreliella burgdorferi (strain ATCC 35210 / DSM 4680 / CIP 102532 / B31) (Borrelia burgdorferi).